A 780-amino-acid chain; its full sequence is E3 UFM1-protein ligase 1 homolog (780 aa).

The span at 403–413 (STSSTNPNHST) shows a compositional bias: polar residues. Disordered regions lie at residues 403 to 458 (STSS…RSHI) and 734 to 760 (SSDK…NIDL). Basic and acidic residues-rich tracts occupy residues 443–458 (KDRS…RSHI) and 736–750 (DKQK…KDSD).

Belongs to the UFL1 family.

Its function is as follows. E3 UFM1-protein ligase that mediates ufmylation of target proteins. The sequence is that of E3 UFM1-protein ligase 1 homolog from Trichoplax adhaerens (Trichoplax reptans).